Here is a 398-residue protein sequence, read N- to C-terminus: Metal tolerance protein 1 (398 aa).

The Cytoplasmic segment spans residues Met1 to Arg56. Residues Lys57–Ile77 traverse the membrane as a helical segment. Topologically, residues Lys78–Ala89 are vacuolar. Residues His90–Trp110 traverse the membrane as a helical segment. Topologically, residues Glu111–Arg122 are cytoplasmic. A helical membrane pass occupies residues Ile123–Val143. Topologically, residues Tyr144–Gly159 are vacuolar. The chain crosses the membrane as a helical span at residues Phe160–Leu180. Over Gly181–Tyr263 the chain is Cytoplasmic. Residues His182–His232 form a required for zinc-binding region. Residues His186–His232 form a disordered region. A compositionally biased stretch (basic residues) spans Ser187 to Ser202. The span at His216 to His232 shows a compositional bias: basic and acidic residues. Residues Leu264–Trp284 form a helical membrane-spanning segment. Over Tyr285–Lys290 the chain is Vacuolar. Residues Ile291 to Met311 traverse the membrane as a helical segment. Residues Ile312–Arg398 are Cytoplasmic-facing.

It belongs to the cation diffusion facilitator (CDF) transporter (TC 2.A.4) family. SLC30A subfamily. As to expression, ubiquitously expressed at low levels.

It is found in the vacuole membrane. Mediates zinc accumulation in roots and confers resistance to zinc. Involved in sequestration of excess zinc in the cytoplasm into vacuoles to maintain zinc homeostasis. Can also transport cadmium with a low efficiency. This is Metal tolerance protein 1 from Arabidopsis thaliana (Mouse-ear cress).